Here is a 113-residue protein sequence, read N- to C-terminus: UPF0482 protein YnfB (113 aa).

A signal peptide spans 1 to 28 (MNYTLSKRLCLTAMLTLAAVVYTTSAFA).

It belongs to the UPF0482 family.

The polypeptide is UPF0482 protein YnfB (Salmonella arizonae (strain ATCC BAA-731 / CDC346-86 / RSK2980)).